A 323-amino-acid chain; its full sequence is D-specific alpha-keto acid dehydrogenase (323 aa).

Residues 157 to 158 (HI), 230 to 232 (TGR), and aspartate 256 each bind NAD(+). Residue arginine 232 is part of the active site. Glutamate 261 is an active-site residue. Histidine 293 acts as the Proton donor in catalysis. 293 to 296 (HTAY) serves as a coordination point for NAD(+).

It belongs to the D-isomer specific 2-hydroxyacid dehydrogenase family.

Required for high-level resistance to glycopeptides antibiotics. Catalyzes the reduction of 2-keto acids to 2-D-hydroxy acids that give rise to peptidoglycan precursors that terminate in the depsipeptide D-alanine-2-lactate rather than the dipeptide D-alanine-D-alanine thus preventing vancomycin binding. The protein is D-specific alpha-keto acid dehydrogenase (vanHB) of Enterococcus faecalis (strain ATCC 700802 / V583).